The primary structure comprises 706 residues: ABC transporter D family member 2, chloroplastic (706 aa).

The transit peptide at 1 to 44 (MILMITAPVCPPHLLLRHSSLLRHESSIGNFHRKKNPRFRTVSC) directs the protein to the chloroplast. Ser-45 carries the N-acetylserine modification. The next 5 helical transmembrane spans lie at 88-108 (LAAVFALTLATTGISVGFNFL), 124-144 (FTKQLFYYLCAFAGGIPFFVL), 200-222 (TALSFSLTLVNATIDLISFSNIL), 237-257 (SFGGTAISVFLGKGLVNLNFL), and 326-346 (ILPVAVVAPMYFSGKIEFGVI). Positions 88–372 (LAAVFALTLA…VVYQFQAISS (285 aa)) constitute an ABC transmembrane type-1 domain. In terms of domain architecture, ABC transporter spans 430-697 (LEIEELTLQT…DAQDSLYGRL (268 aa)). 464-471 (GPSGSGKT) is a binding site for ATP. The segment at 545–569 (TTPGGSNIDGSPPLLIREDGNEKPT) is disordered. Residues 560–569 (IREDGNEKPT) show a composition bias toward basic and acidic residues.

The protein belongs to the ABC transporter superfamily. ABCD family. Peroxisomal fatty acyl CoA transporter (TC 3.A.1.203) subfamily. In terms of assembly, homodimer or heterodimer.

It localises to the membrane. The protein localises to the plastid. It is found in the chloroplast. This Arabidopsis thaliana (Mouse-ear cress) protein is ABC transporter D family member 2, chloroplastic (ABCC2).